The chain runs to 293 residues: 1D-myo-inositol 2-acetamido-2-deoxy-alpha-D-glucopyranoside deacetylase (293 aa).

Zn(2+) contacts are provided by His-16, Asp-19, and His-156.

The protein belongs to the MshB deacetylase family. Zn(2+) serves as cofactor.

The enzyme catalyses 1D-myo-inositol 2-acetamido-2-deoxy-alpha-D-glucopyranoside + H2O = 1D-myo-inositol 2-amino-2-deoxy-alpha-D-glucopyranoside + acetate. In terms of biological role, catalyzes the deacetylation of 1D-myo-inositol 2-acetamido-2-deoxy-alpha-D-glucopyranoside (GlcNAc-Ins) in the mycothiol biosynthesis pathway. The sequence is that of 1D-myo-inositol 2-acetamido-2-deoxy-alpha-D-glucopyranoside deacetylase from Nakamurella multipartita (strain ATCC 700099 / DSM 44233 / CIP 104796 / JCM 9543 / NBRC 105858 / Y-104) (Microsphaera multipartita).